The sequence spans 351 residues: Trace amine-associated receptor 2 (351 aa).

Residues 1-48 (MAVSSEQHELSHFKRTQTKKEKFNCSEYGNRSCPENERSLGVRVAMYS) lie on the Extracellular side of the membrane. Residues asparagine 24 and asparagine 30 are each glycosylated (N-linked (GlcNAc...) asparagine). Cystine bridges form between cysteine 33–cysteine 197 and cysteine 116–cysteine 201. The helical transmembrane segment at 49–69 (FMAGSIFITIFGNLAMIISIS) threads the bilayer. Over 70–79 (YFKQLHTPTN) the chain is Cytoplasmic. Residues 80–100 (FLILSMAITDFLLGFTIMPYS) traverse the membrane as a helical segment. Over 101-118 (MIRSVENCWYFGLTFCKI) the chain is Extracellular. Residues 119–139 (YYSFDLMLSITSIFHLCSVAI) form a helical membrane-spanning segment. Residues 140-162 (DRFYAICYPLLYSTKITIPVIKR) are Cytoplasmic-facing. Residues 163–183 (LLLLCWSVPGAFAFGVVFSEA) form a helical membrane-spanning segment. Over 184–207 (YADGIEGYDILVACSSSCPVMFNK) the chain is Extracellular. Residues 208-228 (LWGTTLFMAGFFTPGSMMVGI) traverse the membrane as a helical segment. Residues 229-263 (YGKIFAVSRKHAHAINNLRENQNNQVKKDKKAAKT) are Cytoplasmic-facing. A helical transmembrane segment spans residues 264–284 (LGIVIGVFLLCWFPCFFTILL). The Extracellular portion of the chain corresponds to 285–299 (DPFLNFSTPVVLFDA). Asparagine 289 carries an N-linked (GlcNAc...) asparagine glycan. The chain crosses the membrane as a helical span at residues 300–322 (LTWFGYFNSTCNPLIYGFFYPWF). The Cytoplasmic portion of the chain corresponds to 323–351 (RRALKYILLGKIFSSCFHNTILCMQKESE).

It belongs to the G-protein coupled receptor 1 family. As to expression, not expressed in the pons, thalamus, hypothalamus, hippocampus, caudate, putamen, frontal cortex, basal forebrain, midbrain or liver.

The protein resides in the cell membrane. Functionally, orphan olfactory receptor specific for trace amines. Trace amine compounds are enriched in animal body fluids and act on trace amine-associated receptors (TAARs) to elicit both intraspecific and interspecific innate behaviors. Ligand-binding causes a conformation change that triggers signaling via the G(s)-class of G-proteins which activate adenylate cyclase. The protein is Trace amine-associated receptor 2 of Homo sapiens (Human).